Consider the following 305-residue polypeptide: Chromatin modification-related protein png2 (305 aa).

The segment at 135 to 239 (TVTPQTSERR…PLVKHDTLDS (105 aa)) is disordered. Low complexity predominate over residues 153–167 (NQHSQQYSSQERSSS). Polar residues-rich tracts occupy residues 168–183 (YNNFEDASSPQSSYHT) and 195–210 (KSSSPPLSSTKHAPQS). Tyrosine 181 carries the post-translational modification Phosphotyrosine. Threonine 183 is modified (phosphothreonine). Phosphoserine occurs at positions 197 and 198. The segment covering 211–223 (TERRPVRRSESRL) has biased composition (basic and acidic residues). The PHD-type zinc-finger motif lies at 248 to 297 (QLYCYCQQVSYGQMIGCDNENCKREWFHLPCVGLVEPPKGIWYCKECEEL). Zn(2+) contacts are provided by cysteine 251, cysteine 253, cysteine 264, cysteine 269, histidine 275, cysteine 278, cysteine 291, and cysteine 294.

Belongs to the ING family. As to quaternary structure, interacts with H3K4me3 and to a lesser extent with H3K4me2. Component of the clr6 histone deacetylase complex I'composed of at least clr6, png2, prw1, pst1 and sds3.

It is found in the cytoplasm. It localises to the nucleus. In terms of biological role, component of the clr6 histone deacetylase complex I' responsible for the deacetylation of lysine residues on the N-terminal part of the core histones (H2A, H2B, H3 and H4). Histone deacetylation gives a tag for epigenetic repression and plays an important role in transcriptional regulation, cell cycle progression and developmental events. Has a role in silencing of mating type genes. In Schizosaccharomyces pombe (strain 972 / ATCC 24843) (Fission yeast), this protein is Chromatin modification-related protein png2 (png2).